Here is a 309-residue protein sequence, read N- to C-terminus: Aromatic prenyltransferase (309 aa).

This sequence belongs to the aromatic prenyltransferase family.

In terms of biological role, prenyltransferase that attaches isoprenoid moieties to carbon atoms of aromatic substrates in an enzyme-catalyzed Friedel-Crafts reaction. Shows specificity for dimethylallyl diphosphate (DMAPP) and does not accept geranyl diphosphate (GPP) or isopentenyl diphosphate (IPP). Prenylates the artificial substrate 2,7-dihydroxynaphthalene (2,7-DHN), as well as dihydrophenazine-1-carboxylic acid and 4-hydroxybenzoic acid at lower levels. Only traces of products are detected with aspulvinone E or flaviolin as substrates; and no product is formed with L-tryptophan, L-tyrosine, or 4-hydroxyphenylpyruvate. Ptf seems no to be involved in the prenylation reaction in the biosynthesis of aspulvinone H and J and the physiological function of ptf remains unknown. The protein is Aromatic prenyltransferase of Botryotinia fuckeliana (strain B05.10) (Noble rot fungus).